Consider the following 263-residue polypeptide: UPF0739 protein C1orf74 homolog (263 aa).

Belongs to the UPF0739 family.

This is UPF0739 protein C1orf74 homolog from Mus musculus (Mouse).